The chain runs to 1003 residues: Leucine-rich repeat receptor-like serine/threonine-protein kinase BAM1 (1003 aa).

The signal sequence occupies residues 1–19 (MKLFLLLLFLLHISHTFTA). The Extracellular segment spans residues 20 to 640 (SRPISEFRAL…HSKGPLSASM (621 aa)). LRR repeat units lie at residues 68–92 (RRHV…VSHL), 93–116 (RLLQ…ISSL), 117–140 (SGLR…ISSG), 142–165 (VNLR…VTNL), 166–191 (TQLR…SWPV), 193–213 (EYLA…IGNL), 215–238 (TLRE…IGNL), 239–262 (SELV…IGKL), 263–285 (QKLD…ELGT), 286–310 (LSSL…FAEL), 312–334 (NLTL…IGDL), 335–358 (PELE…LGEN), 359–382 (GKLN…MCSG), 385–406 (LETL…LGKC), 407–430 (ESLT…LFGL), 432–454 (KLTQ…GGVS), 455–480 (VNLG…NFTG), 482–502 (QKLL…VGKL), 503–526 (QQLS…ISRC), 527–550 (KLLT…ITAM), 551–574 (KILN…ISSM), and 575–598 (QSLT…GQFS). 6 N-linked (GlcNAc...) asparagine glycosylation sites follow: Asn-80, Asn-97, Asn-123, Asn-130, Asn-153, and Asn-164. Asn-212 and Asn-237 each carry an N-linked (GlcNAc...) asparagine glycan. N-linked (GlcNAc...) asparagine glycosylation is found at Asn-312 and Asn-346. Residue Asn-420 is glycosylated (N-linked (GlcNAc...) asparagine). An N-linked (GlcNAc...) asparagine glycan is attached at Asn-477. N-linked (GlcNAc...) asparagine glycosylation is found at Asn-557, Asn-586, and Asn-601. A helical membrane pass occupies residues 641–661 (KLLLVLGLLVCSIAFAVVAII). Residues 662–1003 (KARSLKKASE…VQSPPDLLNL (342 aa)) are Cytoplasmic-facing. Thr-686 is modified (phosphothreonine). In terms of domain architecture, Protein kinase spans 694–971 (LKEDNIIGKG…VQILTEIPKL (278 aa)). ATP is bound by residues 700–708 (IGKGGAGIV) and Lys-722. Residues Tyr-769 and Tyr-807 each carry the phosphotyrosine modification. The active-site Proton acceptor is the Asp-820. Ser-855 is subject to Phosphoserine. A phosphotyrosine mark is found at Tyr-863 and Tyr-870. Thr-871 is subject to Phosphothreonine. The disordered stretch occupies residues 969 to 1003 (PKLPPSKDQPMTESAPESELSPKSGVQSPPDLLNL). At Ser-996 the chain carries Phosphoserine.

Belongs to the protein kinase superfamily. Ser/Thr protein kinase family. In terms of assembly, self-interacts and interacts with BAM2 and CLV1. Binds to the CLV3, CLE5, CLE11, CLE18, CLE19, CLE22, CLE25, CLE26, CLE40, CLE41 and CLE42 mature peptides, probably via its extracellular leucine-rich repeat region. Expressed in seedlings, roots, leaves, inflorescences, flowers and siliques.

It localises to the cell membrane. The catalysed reaction is L-seryl-[protein] + ATP = O-phospho-L-seryl-[protein] + ADP + H(+). It catalyses the reaction L-threonyl-[protein] + ATP = O-phospho-L-threonyl-[protein] + ADP + H(+). Necessary for male gametophyte development, as well as ovule specification and function. Involved in cell-cell communication process required during early anther development, and regulating cell division and differentiation to organize cell layers. Required for the development of high-ordered vascular strands within the leaf and a correlated control of leaf shape, size and symmetry. May regulate the CLV1-dependent CLV3-mediated signaling in meristems maintenance. The chain is Leucine-rich repeat receptor-like serine/threonine-protein kinase BAM1 (BAM1) from Arabidopsis thaliana (Mouse-ear cress).